A 692-amino-acid polypeptide reads, in one-letter code: Polyribonucleotide nucleotidyltransferase (692 aa).

Mg(2+)-binding residues include Asp-484 and Asp-490. In terms of domain architecture, KH spans 551 to 610 (PRIITIQINPDRIRDVIGPGGKVIRALTEETGATIDIQDNGTVTIASVDGEAGAAAKRRI). In terms of domain architecture, S1 motif spans 620 to 688 (DTIYDGKVAK…RQGKIKLSMK (69 aa)).

This sequence belongs to the polyribonucleotide nucleotidyltransferase family. Component of the RNA degradosome, which is a multiprotein complex involved in RNA processing and mRNA degradation. It depends on Mg(2+) as a cofactor.

It is found in the cytoplasm. It carries out the reaction RNA(n+1) + phosphate = RNA(n) + a ribonucleoside 5'-diphosphate. Functionally, involved in mRNA degradation. Catalyzes the phosphorolysis of single-stranded polyribonucleotides processively in the 3'- to 5'-direction. In Acidithiobacillus ferrooxidans (strain ATCC 53993 / BNL-5-31) (Leptospirillum ferrooxidans (ATCC 53993)), this protein is Polyribonucleotide nucleotidyltransferase.